We begin with the raw amino-acid sequence, 229 residues long: 1-Cys peroxiredoxin PER1 (229 aa).

Residues 4–173 (LTIGDTVPNL…VLRAVDSLLT (170 aa)) form the Thioredoxin domain. The active-site Cysteine sulfenic acid (-SOH) intermediate is the cysteine 46. A Bipartite nuclear localization signal motif is present at residues 205-228 (RKMFPQGFETADLPSKKGYLRFTK).

The protein belongs to the peroxiredoxin family. Prx6 subfamily.

The protein localises to the nucleus. It is found in the cytoplasm. The catalysed reaction is a hydroperoxide + [thioredoxin]-dithiol = an alcohol + [thioredoxin]-disulfide + H2O. Its function is as follows. Thiol-specific peroxidase that catalyzes the reduction of hydrogen peroxide and organic hydroperoxides to water and alcohols, respectively. Seems to contribute to the inhibition of germination during stress. The sequence is that of 1-Cys peroxiredoxin PER1 (PER1) from Zea mays (Maize).